The following is a 599-amino-acid chain: NADH-quinone oxidoreductase subunit C/D (599 aa).

Residues 1 to 189 (MTELMTQNSA…DPFVLTKQKE (189 aa)) form an NADH dehydrogenase I subunit C region. Residues 213–599 (DFMFLNLGPN…IDFVMSDVDR (387 aa)) are NADH dehydrogenase I subunit D.

It in the N-terminal section; belongs to the complex I 30 kDa subunit family. In the C-terminal section; belongs to the complex I 49 kDa subunit family. NDH-1 is composed of 13 different subunits. Subunits NuoB, CD, E, F, and G constitute the peripheral sector of the complex.

The protein localises to the cell inner membrane. It catalyses the reaction a quinone + NADH + 5 H(+)(in) = a quinol + NAD(+) + 4 H(+)(out). NDH-1 shuttles electrons from NADH, via FMN and iron-sulfur (Fe-S) centers, to quinones in the respiratory chain. The immediate electron acceptor for the enzyme in this species is believed to be ubiquinone. Couples the redox reaction to proton translocation (for every two electrons transferred, four hydrogen ions are translocated across the cytoplasmic membrane), and thus conserves the redox energy in a proton gradient. In Sodalis glossinidius (strain morsitans), this protein is NADH-quinone oxidoreductase subunit C/D.